We begin with the raw amino-acid sequence, 69 residues long: Cytochrome c oxidase subunit 8A, mitochondrial (69 aa).

Residues 1 to 25 constitute a mitochondrion transit peptide; the sequence is MSVLTPLLLRGLTGSARRLPVPRAK. Residues 2-19 carry the SIFI-degron motif; that stretch reads SVLTPLLLRGLTGSARRL. The Mitochondrial matrix portion of the chain corresponds to 26 to 36; it reads IHSLPPEGKLG. The helical transmembrane segment at 37–60 threads the bilayer; it reads IMELAVGLTSCFVTFLLPAGWILS. Residues 61–69 lie on the Mitochondrial intermembrane side of the membrane; sequence HLETYRRPE.

It belongs to the cytochrome c oxidase VIII family. As to quaternary structure, component of the cytochrome c oxidase (complex IV, CIV), a multisubunit enzyme composed of 14 subunits. The complex is composed of a catalytic core of 3 subunits MT-CO1, MT-CO2 and MT-CO3, encoded in the mitochondrial DNA, and 11 supernumerary subunits COX4I1 (or COX4I2), COX5A, COX5B, COX6A1 (or COX6A2), COX6B1 (or COX6B2), COX6C, COX7A2 (or COX7A1), COX7B, COX7C, COX8A and NDUFA4, which are encoded in the nuclear genome. The complex exists as a monomer or a dimer and forms supercomplexes (SCs) in the inner mitochondrial membrane with NADH-ubiquinone oxidoreductase (complex I, CI) and ubiquinol-cytochrome c oxidoreductase (cytochrome b-c1 complex, complex III, CIII), resulting in different assemblies (supercomplex SCI(1)III(2)IV(1) and megacomplex MCI(2)III(2)IV(2)). In response to mitochondrial stress, the precursor protein is ubiquitinated by the SIFI complex in the cytoplasm before mitochondrial import, leading to its degradation. Within the SIFI complex, UBR4 initiates ubiquitin chain that are further elongated or branched by KCMF1. In terms of tissue distribution, widely expressed.

It localises to the mitochondrion inner membrane. The protein operates within energy metabolism; oxidative phosphorylation. In terms of biological role, component of the cytochrome c oxidase, the last enzyme in the mitochondrial electron transport chain which drives oxidative phosphorylation. The respiratory chain contains 3 multisubunit complexes succinate dehydrogenase (complex II, CII), ubiquinol-cytochrome c oxidoreductase (cytochrome b-c1 complex, complex III, CIII) and cytochrome c oxidase (complex IV, CIV), that cooperate to transfer electrons derived from NADH and succinate to molecular oxygen, creating an electrochemical gradient over the inner membrane that drives transmembrane transport and the ATP synthase. Cytochrome c oxidase is the component of the respiratory chain that catalyzes the reduction of oxygen to water. Electrons originating from reduced cytochrome c in the intermembrane space (IMS) are transferred via the dinuclear copper A center (CU(A)) of subunit 2 and heme A of subunit 1 to the active site in subunit 1, a binuclear center (BNC) formed by heme A3 and copper B (CU(B)). The BNC reduces molecular oxygen to 2 water molecules using 4 electrons from cytochrome c in the IMS and 4 protons from the mitochondrial matrix. The protein is Cytochrome c oxidase subunit 8A, mitochondrial (COX8A) of Homo sapiens (Human).